Reading from the N-terminus, the 375-residue chain is N-acetylneuraminate epimerase (375 aa).

The signal sequence occupies residues 1–22 (MKLTKTALCTALFATFTFSANA). Kelch repeat units lie at residues 43 to 87 (TVYV…AAVD), 89 to 140 (KLYV…ASHG), 142 to 176 (KVYILGGSNLSIFNGFFQDNVAAGEDQAKKDEIAA), 177 to 222 (AYFD…TIQG), 225 to 273 (LVVV…LAGA), 295 to 344 (KQYK…SYNN), and 346 to 375 (VLLIGGETDGGKALTSVKAISYDGKKLTIE). E231 serves as the catalytic Proton acceptor.

This sequence belongs to the NanM family. Homodimer.

It is found in the periplasm. The catalysed reaction is N-acetyl-alpha-neuraminate = N-acetyl-beta-neuraminate. Functionally, converts alpha-N-acetylneuranimic acid (Neu5Ac) to the beta-anomer, accelerating the equilibrium between the alpha- and beta-anomers. Probably facilitates sialidase-negative bacteria to compete successfully for limited amounts of extracellular Neu5Ac, which is likely taken up in the beta-anomer. In addition, the rapid removal of sialic acid from solution might be advantageous to the bacterium to damp down host responses. In Haemophilus influenzae (strain PittEE), this protein is N-acetylneuraminate epimerase.